The chain runs to 112 residues: Integration host factor subunit alpha (112 aa).

This sequence belongs to the bacterial histone-like protein family. Heterodimer of an alpha and a beta chain.

Functionally, this protein is one of the two subunits of integration host factor, a specific DNA-binding protein that functions in genetic recombination as well as in transcriptional and translational control. This chain is Integration host factor subunit alpha, found in Agrobacterium fabrum (strain C58 / ATCC 33970) (Agrobacterium tumefaciens (strain C58)).